Consider the following 360-residue polypeptide: D-alanine--D-alanine ligase (360 aa).

The region spanning 139–344 (KDVFAQAGLA…YPELIEKLVS (206 aa)) is the ATP-grasp domain. Residue 172 to 227 (EQVLGYPCFVKPANMGSSVGISKCRSKEELQTAFDLAFQYDRRVVVEEGVVGREIE) coordinates ATP. The Mg(2+) site is built by Asp-298, Glu-311, and Asn-313.

It belongs to the D-alanine--D-alanine ligase family. The cofactor is Mg(2+). Mn(2+) serves as cofactor.

It is found in the cytoplasm. The catalysed reaction is 2 D-alanine + ATP = D-alanyl-D-alanine + ADP + phosphate + H(+). The protein operates within cell wall biogenesis; peptidoglycan biosynthesis. In terms of biological role, cell wall formation. The polypeptide is D-alanine--D-alanine ligase (Bacillus pumilus (strain SAFR-032)).